Reading from the N-terminus, the 497-residue chain is ADP-dependent glucokinase (497 aa).

Residues 1–22 (MALWRGSAYAGFLALAVGCVFL) form the signal peptide. The ADPK domain maps to 52 to 497 (SPEGRLAAAW…LFYSEVHPHY (446 aa)). Mg(2+)-binding residues include Glu297, Glu328, and Asp481. The Proton acceptor role is filled by Asp481.

This sequence belongs to the ADP-dependent glucokinase family. In terms of assembly, monomer. The cofactor is Mg(2+).

Its subcellular location is the secreted. It catalyses the reaction D-glucose + ADP = D-glucose 6-phosphate + AMP + H(+). It functions in the pathway carbohydrate degradation; glycolysis. Functionally, catalyzes the phosphorylation of D-glucose to D-glucose 6-phosphate using ADP as the phosphate donor. GDP and CDP can replace ADP, but with reduced efficiency. This is ADP-dependent glucokinase (ADPGK) from Homo sapiens (Human).